The chain runs to 502 residues: Protein DETOXIFICATION 55 (502 aa).

Helical transmembrane passes span 30–50 (IWDISFPVAAMSILNYLKNMT), 61–81 (LELAGGALAIGFTNITGYSVL), 112–132 (IFLLLLASLPISLLWLNLAPL), 145–165 (VASLYCSFSLPDLLANSFLHP), 185–205 (VSVLLHLPITAFFTFYISLGV), 207–227 (GVAVSSFLTNFISLSLLLCYI), 261–283 (VWSTLVKFAVPSCIAVCLEWWWY), 298–318 (VALAAAAIVIQTTSLMYTIPT), 344–364 (ATVAVGAAVAVSVFGLVGTTV), 378–398 (VVLELTAAVIPVIGACELANC), 419–439 (INFYAFYVVGAPVAVVLAFVW), and 447–467 (CYGLLGAQLACAISILTVVYN).

The protein belongs to the multi antimicrobial extrusion (MATE) (TC 2.A.66.1) family.

The protein resides in the membrane. In Arabidopsis thaliana (Mouse-ear cress), this protein is Protein DETOXIFICATION 55.